The sequence spans 460 residues: Glycogen synthase (460 aa).

Residue K15 coordinates ADP-alpha-D-glucose.

This sequence belongs to the glycosyltransferase 1 family. Bacterial/plant glycogen synthase subfamily.

It catalyses the reaction [(1-&gt;4)-alpha-D-glucosyl](n) + ADP-alpha-D-glucose = [(1-&gt;4)-alpha-D-glucosyl](n+1) + ADP + H(+). The protein operates within glycan biosynthesis; glycogen biosynthesis. In terms of biological role, synthesizes alpha-1,4-glucan chains using ADP-glucose. In Trichodesmium erythraeum (strain IMS101), this protein is Glycogen synthase.